Reading from the N-terminus, the 194-residue chain is Small ribosomal subunit protein uS4c (194 aa).

Positions 82–143 (MRLDNILFRL…KQRSKALIQD (62 aa)) constitute an S4 RNA-binding domain.

The protein belongs to the universal ribosomal protein uS4 family. In terms of assembly, part of the 30S ribosomal subunit. Contacts protein S5. The interaction surface between S4 and S5 is involved in control of translational fidelity.

Its subcellular location is the plastid. The protein localises to the chloroplast. Functionally, one of the primary rRNA binding proteins, it binds directly to 16S rRNA where it nucleates assembly of the body of the 30S subunit. In terms of biological role, with S5 and S12 plays an important role in translational accuracy. This is Small ribosomal subunit protein uS4c (rps4) from Bobartia gladiata (Sword rush-lily).